Consider the following 208-residue polypeptide: Large ribosomal subunit protein uL4 (208 aa).

The disordered stretch occupies residues 50-83 (VKTRAEVSGGGRKPWKQKGTGRARQGSIRAPQWK).

The protein belongs to the universal ribosomal protein uL4 family. As to quaternary structure, part of the 50S ribosomal subunit.

Functionally, one of the primary rRNA binding proteins, this protein initially binds near the 5'-end of the 23S rRNA. It is important during the early stages of 50S assembly. It makes multiple contacts with different domains of the 23S rRNA in the assembled 50S subunit and ribosome. Forms part of the polypeptide exit tunnel. The polypeptide is Large ribosomal subunit protein uL4 (Mycoplasma mycoides subsp. mycoides SC (strain CCUG 32753 / NCTC 10114 / PG1)).